The sequence spans 639 residues: Homeobox protein 9 (639 aa).

Disordered stretches follow at residues 1–45 (MLNS…DKQN), 66–144 (SPNH…DDNS), 157–179 (NQNQ…QNQN), 262–313 (PRTL…SSGT), 331–422 (SESS…QTSN), and 436–547 (TNKN…NNEN). The stretch at 72–109 (ANNNNNNNNNNNNNNNNNNNNNNNNNNNNNNNNNNNIQ) forms a coiled coil. Composition is skewed to low complexity over residues 73-119 (NNNN…SNNN) and 126-142 (GSLN…GNDD). 2 coiled-coil regions span residues 152–184 (SNQN…KDSW) and 230–296 (EIEI…NINE). A compositionally biased stretch (low complexity) spans 266-300 (NNSSDSISENINNNNNNNNNNNNNNNNNINESNIN). The segment covering 345–354 (QPRKVPRDLN) has biased composition (basic and acidic residues). Over residues 358–399 (NNNINYANNNNNNNNNNNNNNHNNNINNNNNNNNNNNNNSNN) the composition is skewed to low complexity. Residues 365–396 (NNNNNNNNNNNNNNHNNNINNNNNNNNNNNNN) adopt a coiled-coil conformation. The segment covering 405-422 (GSITNSVNIKPSKDQTSN) has biased composition (polar residues). Residues 436 to 526 (TNKNNNNNNN…NNNLTSSSNN (91 aa)) are compositionally biased toward low complexity. The segment covering 532–547 (GNTSPNQSSANGNNEN) has biased composition (polar residues). The segment at residues 559–621 (KRKKRGKLPG…NARRRILPRQ (63 aa)) is a DNA-binding region (homeobox).

It localises to the nucleus. Putative transcription factor. The protein is Homeobox protein 9 (hbx9) of Dictyostelium discoideum (Social amoeba).